The sequence spans 441 residues: Ubiquitin carboxyl-terminal hydrolase MINDY-3 (441 aa).

Catalysis depends on Cys-51, which acts as the Nucleophile. His-284 functions as the Proton acceptor in the catalytic mechanism.

It belongs to the MINDY deubiquitinase family. FAM188 subfamily.

It is found in the nucleus. The catalysed reaction is Thiol-dependent hydrolysis of ester, thioester, amide, peptide and isopeptide bonds formed by the C-terminal Gly of ubiquitin (a 76-residue protein attached to proteins as an intracellular targeting signal).. Functionally, hydrolase that can remove 'Lys-48'-linked conjugated ubiquitin from proteins. In Xenopus tropicalis (Western clawed frog), this protein is Ubiquitin carboxyl-terminal hydrolase MINDY-3 (mindy3).